The primary structure comprises 277 residues: Large ribosomal subunit protein uL2 (277 aa).

The tract at residues 199–277 (DHGNINDGKA…ILRSRHQRKS (79 aa)) is disordered.

It belongs to the universal ribosomal protein uL2 family. Part of the 50S ribosomal subunit. Forms a bridge to the 30S subunit in the 70S ribosome.

One of the primary rRNA binding proteins. Required for association of the 30S and 50S subunits to form the 70S ribosome, for tRNA binding and peptide bond formation. It has been suggested to have peptidyltransferase activity; this is somewhat controversial. Makes several contacts with the 16S rRNA in the 70S ribosome. In Mesorhizobium japonicum (strain LMG 29417 / CECT 9101 / MAFF 303099) (Mesorhizobium loti (strain MAFF 303099)), this protein is Large ribosomal subunit protein uL2.